The primary structure comprises 508 residues: Mu-like prophage FluMu protein gp28 (508 aa).

To phage Mu protein gp28.

This chain is Mu-like prophage FluMu protein gp28, found in Haemophilus influenzae (strain ATCC 51907 / DSM 11121 / KW20 / Rd).